The primary structure comprises 672 residues: NADPH-Fe(3+) oxidoreductase subunit beta (672 aa).

4 residues coordinate [4Fe-4S] cluster: Cys203, Cys207, Cys211, and Cys215. FAD is bound at residue 254-283 (KKVAIVGAGPAGLACAYYLALEGYPCTIYE). 388–421 (GKKVVVVGGGNTAIDCVRVALREGAEESTLLYRR) serves as a coordination point for NADP(+). 552-562 (TDLEGVFAGGD) lines the FAD pocket.

Heterotetramer with 2 alpha subunits. The cofactor is [4Fe-4S] cluster. It depends on FAD as a cofactor.

The protein resides in the cell membrane. Its function is as follows. Probably involved in acetate metabolism and not in the reduction of Fe(3+) chelates. May serve as a major route for NADP regeneration. The protein is NADPH-Fe(3+) oxidoreductase subunit beta (sfrB) of Geobacter sulfurreducens (strain DL-1 / KN400).